The sequence spans 328 residues: Gonadotropin-releasing hormone receptor (328 aa).

Over 1 to 38 the chain is Extracellular; that stretch reads MANSASPEQNQNHCSAINNSIPLMQGNLPTLTLSGKIR. An N-linked (GlcNAc...) asparagine glycan is attached at N18. The helical transmembrane segment at 39–58 threads the bilayer; sequence VTVTFFLFLLSATFNASFLL. Residues 59 to 77 are Cytoplasmic-facing; sequence KLQKWTQKKEKGKKLSRMK. A helical membrane pass occupies residues 78-97; sequence LLLKHLTLANLLETLIVMPL. Over 98 to 115 the chain is Extracellular; it reads DGMWNITVQWYAGELLCK. N-linked (GlcNAc...) asparagine glycosylation is present at N102. C114 and C196 are oxidised to a cystine. Residues 116–137 form a helical membrane-spanning segment; it reads VLSYLKLFSMYAPAFMMVVISL. Topologically, residues 138 to 164 are cytoplasmic; the sequence is DRSLAITRPLALKSNSKVGQSMVGLAW. Residues 165–184 form a helical membrane-spanning segment; it reads ILSSVFAGPQLYIFRMIHLA. The Extracellular portion of the chain corresponds to 185 to 212; sequence DSSGQTKVFSQCVTHCSFSQWWHQAFYN. Residues 213 to 232 form a helical membrane-spanning segment; sequence FFTFSCLFIIPLFIMLICNA. Residues 233 to 281 are Cytoplasmic-facing; it reads KIIFTLTRVLHQDPHELQLNQSKNNIPRARLKTLKMTVAFATSFTVCWT. Residues 282–300 form a helical membrane-spanning segment; the sequence is PYYVLGIWYWFDPEMLNRL. The Extracellular segment spans residues 301-306; the sequence is SDPVNH. A helical transmembrane segment spans residues 307 to 326; that stretch reads FFFLFAFLNPCFDPLIYGYF. Residues 327 to 328 lie on the Cytoplasmic side of the membrane; that stretch reads SL.

It belongs to the G-protein coupled receptor 1 family. In terms of tissue distribution, pituitary, ovary, testis, breast and prostate but not in liver and spleen.

It is found in the cell membrane. In terms of biological role, receptor for gonadotropin releasing hormone (GnRH) that mediates the action of GnRH to stimulate the secretion of the gonadotropic hormones luteinizing hormone (LH) and follicle-stimulating hormone (FSH). This receptor mediates its action by association with G-proteins that activate a phosphatidylinositol-calcium second messenger system. Isoform 2 may act as an inhibitor of GnRH-R signaling. The polypeptide is Gonadotropin-releasing hormone receptor (GNRHR) (Homo sapiens (Human)).